The following is a 118-amino-acid chain: Large ribosomal subunit protein uL18 (118 aa).

Belongs to the universal ribosomal protein uL18 family. In terms of assembly, part of the 50S ribosomal subunit; part of the 5S rRNA/L5/L18/L25 subcomplex. Contacts the 5S and 23S rRNAs.

Its function is as follows. This is one of the proteins that bind and probably mediate the attachment of the 5S RNA into the large ribosomal subunit, where it forms part of the central protuberance. The chain is Large ribosomal subunit protein uL18 from Sulfurovum sp. (strain NBC37-1).